Here is a 288-residue protein sequence, read N- to C-terminus: 4-diphosphocytidyl-2-C-methyl-D-erythritol kinase (288 aa).

Residue Lys13 is part of the active site. ATP is bound at residue 96 to 106 (PMGGGIGGGSS). Asp138 is an active-site residue.

Belongs to the GHMP kinase family. IspE subfamily.

The enzyme catalyses 4-CDP-2-C-methyl-D-erythritol + ATP = 4-CDP-2-C-methyl-D-erythritol 2-phosphate + ADP + H(+). The protein operates within isoprenoid biosynthesis; isopentenyl diphosphate biosynthesis via DXP pathway; isopentenyl diphosphate from 1-deoxy-D-xylulose 5-phosphate: step 3/6. Functionally, catalyzes the phosphorylation of the position 2 hydroxy group of 4-diphosphocytidyl-2C-methyl-D-erythritol. The sequence is that of 4-diphosphocytidyl-2-C-methyl-D-erythritol kinase from Aliivibrio fischeri (strain ATCC 700601 / ES114) (Vibrio fischeri).